The sequence spans 498 residues: ATP synthase subunit beta, chloroplastic (498 aa).

172–179 serves as a coordination point for ATP; sequence GGAGVGKT.

It belongs to the ATPase alpha/beta chains family. In terms of assembly, F-type ATPases have 2 components, CF(1) - the catalytic core - and CF(0) - the membrane proton channel. CF(1) has five subunits: alpha(3), beta(3), gamma(1), delta(1), epsilon(1). CF(0) has four main subunits: a(1), b(1), b'(1) and c(9-12).

It is found in the plastid. It localises to the chloroplast thylakoid membrane. It catalyses the reaction ATP + H2O + 4 H(+)(in) = ADP + phosphate + 5 H(+)(out). In terms of biological role, produces ATP from ADP in the presence of a proton gradient across the membrane. The catalytic sites are hosted primarily by the beta subunits. The protein is ATP synthase subunit beta, chloroplastic of Phalaenopsis aphrodite subsp. formosana (Moth orchid).